Reading from the N-terminus, the 410-residue chain is MVIIWWFWSLLAICASDSFRDQAVAIMRTTPVIDGHNDLPWQLLNLFNNQLLRPDADLNKLAQTHTNIPKLKAGFVGGQFWSAYMPCDTQNKDAVKRILEQMDVIHRMCQLYPETFMCVTNSSDILQAFRRGKVASLIGVEGGHLIDSSLGVLRTLYHLGMRYLTLTHNCNTPWADNWLVDRGDDEAESHGLSPFGKRLLNEMNRLGVMIDLSHVSVATMKDALQISRAPVIFSHSSAYSLCPHRRNVPDDVLQLVKNTSSLVMVNFFSNFVSCSDSATLPQVADHLDHIKKVAGAGAVGLGGDYDGVTMLPVGLEDVSKYPDLIAELLRRNWTETEVRGLLADNLIRVFSEVELVSNNMQSPEEVPITLKELDGSCRTYYGYSQAHSIHLQTGALVASLASLLFRLHLL.

The first 16 residues, 1–16 (MVIIWWFWSLLAICAS), serve as a signal peptide directing secretion. The Zn(2+) site is built by His36 and Asp38. An intrachain disulfide couples Cys87 to Cys170. An N-linked (GlcNAc...) asparagine glycan is attached at Asn121. Glu141 provides a ligand contact to Zn(2+). Residue His168 participates in substrate binding. Zn(2+)-binding residues include His214 and His235. Residues Cys242 and Cys274 are joined by a disulfide bond. Position 246 (Arg246) interacts with substrate. Asn258 carries N-linked (GlcNAc...) asparagine glycosylation. Asp304 is a binding site for substrate. The N-linked (GlcNAc...) asparagine glycan is linked to Asn332. Residue Ser384 is the site of GPI-anchor amidated serine attachment. A propeptide spans 385–410 (QAHSIHLQTGALVASLASLLFRLHLL) (removed in mature form).

This sequence belongs to the metallo-dependent hydrolases superfamily. Peptidase M19 family. Homodimer; disulfide-linked. The cofactor is Zn(2+). As to expression, expressed in heart, lung, skeletal muscle, kidney, liver, and testis. Not detected in brain and spleen.

The protein resides in the apical cell membrane. It localises to the cell projection. Its subcellular location is the microvillus membrane. The enzyme catalyses an L-aminoacyl-L-amino acid + H2O = 2 an L-alpha-amino acid. It catalyses the reaction leukotriene D4 + H2O = leukotriene E4 + glycine. The catalysed reaction is L-cystine-bis-glycine + 2 H2O = L-cystine + 2 glycine. It carries out the reaction a beta-lactam + H2O = a substituted beta-amino acid. The enzyme catalyses glycyldehydrophenylalanine + H2O = 2,3-didehydrophenylalanine + glycine. Inhibited by L-penicillamine. Inhibited by cilastatin. Functionally, hydrolyzes a wide range of dipeptides including the conversion of leukotriene D4 to leukotriene E4. Hydrolyzes cystinyl-bis-glycine (cys-bis-gly) formed during glutathione degradation. Also possesses beta lactamase activity and hydrolytically inactivates beta-lactam antibiotics. Its function is as follows. Independently of its dipeptidase activity, acts as an adhesion receptor for neutrophil recruitment from bloodstream into inflamed lungs and liver. The protein is Dipeptidase 1 (Dpep1) of Mus musculus (Mouse).